The chain runs to 206 residues: Small ribosomal subunit protein uS7 (206 aa).

A compositionally biased stretch (acidic residues) spans 1 to 19 (MSAEDTPEADADAAEESEP). The interval 1 to 25 (MSAEDTPEADADAAEESEPETARAK) is disordered. S2 bears the N-acetylserine mark.

This sequence belongs to the universal ribosomal protein uS7 family. Part of the 30S ribosomal subunit.

Functionally, one of the primary rRNA binding proteins, it binds directly to 16S rRNA where it nucleates assembly of the head domain of the 30S subunit. Is located at the subunit interface close to the decoding center. The polypeptide is Small ribosomal subunit protein uS7 (Haloarcula marismortui (strain ATCC 43049 / DSM 3752 / JCM 8966 / VKM B-1809) (Halobacterium marismortui)).